The primary structure comprises 304 residues: Ribonuclease Z (304 aa).

Positions 63, 65, 67, 68, 143, 213, and 271 each coordinate Zn(2+). The active-site Proton acceptor is the Asp67.

This sequence belongs to the RNase Z family. In terms of assembly, homodimer. Zn(2+) is required as a cofactor.

The enzyme catalyses Endonucleolytic cleavage of RNA, removing extra 3' nucleotides from tRNA precursor, generating 3' termini of tRNAs. A 3'-hydroxy group is left at the tRNA terminus and a 5'-phosphoryl group is left at the trailer molecule.. Its function is as follows. Zinc phosphodiesterase, which displays some tRNA 3'-processing endonuclease activity. Probably involved in tRNA maturation, by removing a 3'-trailer from precursor tRNA. This Parabacteroides distasonis (strain ATCC 8503 / DSM 20701 / CIP 104284 / JCM 5825 / NCTC 11152) protein is Ribonuclease Z.